Reading from the N-terminus, the 59-residue chain is Potassium channel toxin alpha-KTx 1.12 (59 aa).

The signal sequence occupies residues 1–22 (MKILSVLLLALIICSIVGWSEA). A Pyrrolidone carboxylic acid modification is found at Q23. Cystine bridges form between C29-C50, C35-C55, and C39-C57. The interaction with Ca(2+)-activated K(+) channels stretch occupies residues 48 to 55 (GKCMNKKC).

It belongs to the short scorpion toxin superfamily. Potassium channel inhibitor family. Alpha-KTx 01 subfamily. In terms of tissue distribution, expressed by the venom gland.

It localises to the secreted. In terms of biological role, potent selective inhibitor of high conductance (maxi-K), different medium and small conductance calcium-activated potassium channels (KCa1.1/KCNMA1 and others), as well as a voltage-dependent potassium channel (Kv1.3/KCNA3&gt;Kv1.2/KCNA2&gt;Kv1.6/KCNA3&gt;&gt;Shaker/Sh). It blocks channel activity by a simple bimolecular inhibition process. Functionally, has a pH-specific antimicrobial activity against bacteria (B.subtilis, E.coli and S.aureus) and the fungus C.albicans. The protein is Potassium channel toxin alpha-KTx 1.12 of Leiurus hebraeus (Hebrew deathstalker scorpion).